The chain runs to 383 residues: Succinyl-diaminopimelate desuccinylase (383 aa).

Histidine 74 is a Zn(2+) binding site. Aspartate 76 is a catalytic residue. Aspartate 107 is a binding site for Zn(2+). The active-site Proton acceptor is glutamate 141. Zn(2+)-binding residues include glutamate 142, glutamate 170, and histidine 356.

It belongs to the peptidase M20A family. DapE subfamily. As to quaternary structure, homodimer. It depends on Zn(2+) as a cofactor. Co(2+) serves as cofactor.

The catalysed reaction is N-succinyl-(2S,6S)-2,6-diaminopimelate + H2O = (2S,6S)-2,6-diaminopimelate + succinate. The protein operates within amino-acid biosynthesis; L-lysine biosynthesis via DAP pathway; LL-2,6-diaminopimelate from (S)-tetrahydrodipicolinate (succinylase route): step 3/3. In terms of biological role, catalyzes the hydrolysis of N-succinyl-L,L-diaminopimelic acid (SDAP), forming succinate and LL-2,6-diaminopimelate (DAP), an intermediate involved in the bacterial biosynthesis of lysine and meso-diaminopimelic acid, an essential component of bacterial cell walls. This Polynucleobacter necessarius subsp. necessarius (strain STIR1) protein is Succinyl-diaminopimelate desuccinylase.